The chain runs to 1269 residues: Clustered mitochondria protein homolog (1269 aa).

Positions Pro297–Val552 constitute a Clu domain. A compositionally biased stretch (basic and acidic residues) spans Glu958 to Ala969. Residues Glu958–Glu989 form a disordered region. 2 TPR repeats span residues Val1020–Cys1053 and Gly1147–Glu1180. The disordered stretch occupies residues Leu1211–Asn1269. Polar residues predominate over residues Ser1213–Ile1223. Over residues Ser1258–Asn1269 the composition is skewed to basic residues.

It belongs to the CLU family. As to quaternary structure, may associate with the eukaryotic translation initiation factor 3 (eIF-3) complex.

The protein localises to the cytoplasm. Functionally, mRNA-binding protein involved in proper cytoplasmic distribution of mitochondria. This Kluyveromyces lactis (strain ATCC 8585 / CBS 2359 / DSM 70799 / NBRC 1267 / NRRL Y-1140 / WM37) (Yeast) protein is Clustered mitochondria protein homolog.